The chain runs to 436 residues: Protein GOLM2 (436 aa).

M1 carries the N-acetylmethionine modification. Residues 1 to 14 (MVGFGANRRAGRLP) are Cytoplasmic-facing. The helical; Signal-anchor for type II membrane protein transmembrane segment at 15 to 35 (SLVLVVLLVVIVVLAFNYWSI) threads the bilayer. Residues 35-195 (ISSRHVLLQE…QFLQEQKQEA (161 aa)) are a coiled coil. The Lumenal segment spans residues 36–436 (SSRHVLLQEE…YGKQHFNDVL (401 aa)). Composition is skewed to basic and acidic residues over residues 193 to 207 (QEAH…KELD) and 224 to 247 (VADK…KRGG). Residues 193 to 436 (QEAHKIQSND…YGKQHFNDVL (244 aa)) form a disordered region. Residues S233 and S275 each carry the phosphoserine modification. 2 stretches are compositionally biased toward polar residues: residues 275–295 (SVSQ…QPLS) and 305–321 (NHNG…SSPL). S328 and S332 each carry phosphoserine. Residues 344-362 (ATKDRVSDFHKLKQSRFFD) show a composition bias toward basic and acidic residues. Phosphoserine is present on S366. The span at 399 to 418 (YNEEEDGDGGEEDVQDDEER) shows a compositional bias: acidic residues. The segment covering 426-436 (DYGKQHFNDVL) has biased composition (basic and acidic residues).

The protein belongs to the GOLM family.

The protein resides in the membrane. The sequence is that of Protein GOLM2 (GOLM2) from Pongo abelii (Sumatran orangutan).